A 486-amino-acid polypeptide reads, in one-letter code: Cardiolipin synthase A (486 aa).

2 helical membrane passes run 3 to 23 (TVYT…IAGV) and 38 to 58 (MAWL…YLAV). 2 PLD phosphodiesterase domains span residues 219 to 246 (MDLR…VDPR) and 399 to 426 (EGGL…DMRS). Active-site residues include histidine 224, lysine 226, aspartate 231, histidine 404, lysine 406, and aspartate 411.

The protein belongs to the phospholipase D family. Cardiolipin synthase subfamily. ClsA sub-subfamily.

Its subcellular location is the cell inner membrane. The enzyme catalyses 2 a 1,2-diacyl-sn-glycero-3-phospho-(1'-sn-glycerol) = a cardiolipin + glycerol. Functionally, catalyzes the reversible phosphatidyl group transfer from one phosphatidylglycerol molecule to another to form cardiolipin (CL) (diphosphatidylglycerol) and glycerol. In Shigella flexneri, this protein is Cardiolipin synthase A.